The primary structure comprises 271 residues: Putative phosphoenolpyruvate synthase regulatory protein (271 aa).

152–159 (GASRSGKT) provides a ligand contact to ADP.

It belongs to the pyruvate, phosphate/water dikinase regulatory protein family. PSRP subfamily.

The enzyme catalyses [pyruvate, water dikinase] + ADP = [pyruvate, water dikinase]-phosphate + AMP + H(+). It catalyses the reaction [pyruvate, water dikinase]-phosphate + phosphate + H(+) = [pyruvate, water dikinase] + diphosphate. In terms of biological role, bifunctional serine/threonine kinase and phosphorylase involved in the regulation of the phosphoenolpyruvate synthase (PEPS) by catalyzing its phosphorylation/dephosphorylation. This is Putative phosphoenolpyruvate synthase regulatory protein from Marinobacter nauticus (strain ATCC 700491 / DSM 11845 / VT8) (Marinobacter aquaeolei).